The chain runs to 601 residues: HMG domain-containing protein 4 (601 aa).

Residue Lys-8 forms a Glycyl lysine isopeptide (Lys-Gly) (interchain with G-Cter in SUMO2) linkage. Disordered regions lie at residues 51-410 (VRNS…KKKN) and 473-514 (TTVK…ASPA). A compositionally biased stretch (low complexity) spans 82 to 93 (DYYYGDISSLES). Ser-102 carries the phosphoserine modification. Lys-191 is covalently cross-linked (Glycyl lysine isopeptide (Lys-Gly) (interchain with G-Cter in SUMO2)). Ser-197 carries the phosphoserine modification. 2 stretches are compositionally biased toward polar residues: residues 212–221 (QYPSQQATVK) and 270–282 (DASQ…SANL). Residues 316–344 (IKKKKKSKKSKKKKDKEKHKEKRHSKSKR) are compositionally biased toward basic residues. The segment covering 394–404 (EEKDKERERGE) has biased composition (basic and acidic residues). The segment at residues 407–475 (KKKNMSAYQV…KQNKAEATTV (69 aa)) is a DNA-binding region (HMG box). Residues Ser-497, Ser-502, and Ser-512 each carry the phosphoserine modification.

The protein localises to the nucleus. Functionally, negatively regulates Wnt/beta-catenin signaling during development. The protein is HMG domain-containing protein 4 (HMGXB4) of Homo sapiens (Human).